The chain runs to 357 residues: Protein RecA (357 aa).

An ATP-binding site is contributed by 78–85 (GPESSGKT).

It belongs to the RecA family.

Its subcellular location is the cytoplasm. Its function is as follows. Can catalyze the hydrolysis of ATP in the presence of single-stranded DNA, the ATP-dependent uptake of single-stranded DNA by duplex DNA, and the ATP-dependent hybridization of homologous single-stranded DNAs. It interacts with LexA causing its activation and leading to its autocatalytic cleavage. This chain is Protein RecA, found in Cereibacter sphaeroides (strain ATCC 17029 / ATH 2.4.9) (Rhodobacter sphaeroides).